The following is a 688-amino-acid chain: Chaperone protein dnaK1 (688 aa).

Residue Thr-198 is modified to Phosphothreonine; by autocatalysis. A compositionally biased stretch (basic and acidic residues) spans 630-661 (DLPRDSYRERDAYNNRDYGRDYGRDYGRDSRP). The tract at residues 630–688 (DLPRDSYRERDAYNNRDYGRDYGRDYGRDSRPSYDNSRPPRKSPRPSYQDNWDDDDDWL) is disordered.

It belongs to the heat shock protein 70 family.

Its function is as follows. Acts as a chaperone. The sequence is that of Chaperone protein dnaK1 (dnaK1) from Nostoc sp. (strain PCC 7120 / SAG 25.82 / UTEX 2576).